The primary structure comprises 531 residues: GMP synthase [glutamine-hydrolyzing] (531 aa).

Positions Lys-20–Asp-213 constitute a Glutamine amidotransferase type-1 domain. The active-site Nucleophile is Cys-97. Residues His-187 and Glu-189 contribute to the active site. Residues Trp-214–Arg-406 form the GMPS ATP-PPase domain. An ATP-binding site is contributed by Ser-241 to Ala-247.

In terms of assembly, homodimer.

The catalysed reaction is XMP + L-glutamine + ATP + H2O = GMP + L-glutamate + AMP + diphosphate + 2 H(+). The protein operates within purine metabolism; GMP biosynthesis; GMP from XMP (L-Gln route): step 1/1. Catalyzes the synthesis of GMP from XMP. The chain is GMP synthase [glutamine-hydrolyzing] from Afipia carboxidovorans (strain ATCC 49405 / DSM 1227 / KCTC 32145 / OM5) (Oligotropha carboxidovorans).